The following is an 813-amino-acid chain: LPS-assembly protein LptD (813 aa).

Positions 1 to 22 (MRRALRLLPLPLSIAICLPAMA) are cleaved as a signal peptide.

Belongs to the LptD family. As to quaternary structure, component of the lipopolysaccharide transport and assembly complex. Interacts with LptE and LptA.

It is found in the cell outer membrane. Functionally, together with LptE, is involved in the assembly of lipopolysaccharide (LPS) at the surface of the outer membrane. This is LPS-assembly protein LptD from Xanthomonas axonopodis pv. citri (strain 306).